Here is a 479-residue protein sequence, read N- to C-terminus: Ribosomal RNA small subunit methyltransferase F (479 aa).

S-adenosyl-L-methionine is bound by residues 125-131 (AAAPGSK), glutamate 149, aspartate 176, and aspartate 194. The Nucleophile role is filled by cysteine 247.

Belongs to the class I-like SAM-binding methyltransferase superfamily. RsmB/NOP family.

It is found in the cytoplasm. It catalyses the reaction cytidine(1407) in 16S rRNA + S-adenosyl-L-methionine = 5-methylcytidine(1407) in 16S rRNA + S-adenosyl-L-homocysteine + H(+). Functionally, specifically methylates the cytosine at position 1407 (m5C1407) of 16S rRNA. In Citrobacter koseri (strain ATCC BAA-895 / CDC 4225-83 / SGSC4696), this protein is Ribosomal RNA small subunit methyltransferase F.